The sequence spans 303 residues: Methionyl-tRNA formyltransferase (303 aa).

108 to 111 (SDLP) serves as a coordination point for (6S)-5,6,7,8-tetrahydrofolate.

It belongs to the Fmt family.

The enzyme catalyses L-methionyl-tRNA(fMet) + (6R)-10-formyltetrahydrofolate = N-formyl-L-methionyl-tRNA(fMet) + (6S)-5,6,7,8-tetrahydrofolate + H(+). Its function is as follows. Attaches a formyl group to the free amino group of methionyl-tRNA(fMet). The formyl group appears to play a dual role in the initiator identity of N-formylmethionyl-tRNA by promoting its recognition by IF2 and preventing the misappropriation of this tRNA by the elongation apparatus. In Rickettsia typhi (strain ATCC VR-144 / Wilmington), this protein is Methionyl-tRNA formyltransferase.